The primary structure comprises 140 residues: Nucleoside diphosphate kinase (140 aa).

ATP is bound by residues Lys-11, Phe-59, Arg-87, Thr-93, Arg-104, and Asn-114. The active-site Pros-phosphohistidine intermediate is the His-117.

It belongs to the NDK family. In terms of assembly, homotetramer. The cofactor is Mg(2+).

It is found in the cytoplasm. The enzyme catalyses a 2'-deoxyribonucleoside 5'-diphosphate + ATP = a 2'-deoxyribonucleoside 5'-triphosphate + ADP. It carries out the reaction a ribonucleoside 5'-diphosphate + ATP = a ribonucleoside 5'-triphosphate + ADP. Functionally, major role in the synthesis of nucleoside triphosphates other than ATP. The ATP gamma phosphate is transferred to the NDP beta phosphate via a ping-pong mechanism, using a phosphorylated active-site intermediate. The polypeptide is Nucleoside diphosphate kinase (Dinoroseobacter shibae (strain DSM 16493 / NCIMB 14021 / DFL 12)).